A 434-amino-acid polypeptide reads, in one-letter code: Trigger factor (434 aa).

Residues 161 to 246 enclose the PPIase FKBP-type domain; it reads GKRVSIDFVG…VNKVEARELP (86 aa).

This sequence belongs to the FKBP-type PPIase family. Tig subfamily.

The protein resides in the cytoplasm. It catalyses the reaction [protein]-peptidylproline (omega=180) = [protein]-peptidylproline (omega=0). Functionally, involved in protein export. Acts as a chaperone by maintaining the newly synthesized protein in an open conformation. Functions as a peptidyl-prolyl cis-trans isomerase. This chain is Trigger factor, found in Vibrio parahaemolyticus serotype O3:K6 (strain RIMD 2210633).